Here is a 748-residue protein sequence, read N- to C-terminus: E3 ubiquitin-protein ligase SMURF2 (748 aa).

One can recognise a C2 domain in the interval 1–119; sequence MSNPGGRRNG…TGYQRLDLCK (119 aa). A Glycyl lysine isopeptide (Lys-Gly) (interchain with G-Cter in ubiquitin) cross-link involves residue Lys-119. WW domains lie at 157-190, 251-284, and 297-330; these read NDLP…RPTR, PDLP…DPRV, and GPLP…DPRL. In terms of domain architecture, HECT spans 414–748; that stretch reads RPKDLWKRLM…IEETCGFAVE (335 aa). Cys-716 functions as the Glycyl thioester intermediate in the catalytic mechanism.

Interacts (via WW domains) with SMAD1. Interacts (via WW domains) with SMAD2 (via PY-motif). Interacts (via WW domains) with SMAD3 (via PY-motif). Interacts with SMAD6. Interacts with SMAD7 (via PY-motif) and TGFBR1; SMAD7 recruits SMURF2 to the TGF-beta receptor and regulates its degradation. Does not interact with SMAD4; SMAD4 lacks a PY-motif. Interacts with AIMP1. Interacts with SNON. Interacts with STAMBP and RNF11. May interact with NDFIP1 and NDFIP2; this interaction induces the E3 ubiquitin-protein ligase activity. Interacts with TTC3. As to quaternary structure, (Microbial infection) Interacts (via WW domains) with EBOV and MARV VP40 (via PPXY motif); the interaction facilitates VP40 virus-like particle budding. In terms of processing, auto-ubiquitinated and ubiquitinated in the presence of RNF11 and UBE2D1. Ubiquitinated by the SCF(FBXL15) complex and TTC3, leading to its degradation by the proteasome. 'Lys-48'-linked polyubiquitination mediated by TRAF4 at Lys-119 leads to SMURF2 proteasomal degradation. Widely expressed.

Its subcellular location is the nucleus. It is found in the cytoplasm. The protein resides in the cell membrane. The protein localises to the membrane raft. The enzyme catalyses S-ubiquitinyl-[E2 ubiquitin-conjugating enzyme]-L-cysteine + [acceptor protein]-L-lysine = [E2 ubiquitin-conjugating enzyme]-L-cysteine + N(6)-ubiquitinyl-[acceptor protein]-L-lysine.. It functions in the pathway protein modification; protein ubiquitination. Activated by NDFIP1- and NDFIP2-binding. E3 ubiquitin-protein ligase which accepts ubiquitin from an E2 ubiquitin-conjugating enzyme in the form of a thioester and then directly transfers the ubiquitin to targeted substrates. Interacts with SMAD7 to trigger SMAD7-mediated transforming growth factor beta/TGF-beta receptor ubiquitin-dependent degradation, thereby down-regulating TGF-beta signaling. In addition, interaction with SMAD7 activates autocatalytic degradation, which is prevented by interaction with AIMP1. Also forms a stable complex with TGF-beta receptor-mediated phosphorylated SMAD1, SMAD2 and SMAD3, and targets SMAD1 and SMAD2 for ubiquitination and proteasome-mediated degradation. SMAD2 may recruit substrates, such as SNON, for ubiquitin-dependent degradation. Negatively regulates TGFB1-induced epithelial-mesenchymal transition and myofibroblast differentiation. Functionally, (Microbial infection) In case of filoviruses Ebola/EBOV and Marburg/MARV infection, the complex formed by viral matrix protein VP40 and SMURF2 facilitates virus budding. In Homo sapiens (Human), this protein is E3 ubiquitin-protein ligase SMURF2.